A 276-amino-acid chain; its full sequence is Large ribosomal subunit protein uL2 (276 aa).

Disordered stretches follow at residues 1 to 20 (MGIKKYNPTTNGRRNMTTND) and 219 to 276 (TVRG…RRKK). The segment covering 7–20 (NPTTNGRRNMTTND) has biased composition (polar residues).

The protein belongs to the universal ribosomal protein uL2 family. Part of the 50S ribosomal subunit. Forms a bridge to the 30S subunit in the 70S ribosome.

In terms of biological role, one of the primary rRNA binding proteins. Required for association of the 30S and 50S subunits to form the 70S ribosome, for tRNA binding and peptide bond formation. It has been suggested to have peptidyltransferase activity; this is somewhat controversial. Makes several contacts with the 16S rRNA in the 70S ribosome. The chain is Large ribosomal subunit protein uL2 from Bacillus cereus (strain Q1).